The sequence spans 89 residues: Bombyxin A-2 (89 aa).

The N-terminal stretch at 1 to 19 (MKILLAIALMLSTVMWVST) is a signal peptide. Q20 is subject to Pyrrolidone carboxylic acid. Disulfide bonds link C29–C76, C41–C89, and C75–C80. The propeptide at 50–68 (SDAQFASYGSAWLMPYSAG) is c peptide like.

Belongs to the insulin family. In terms of assembly, heterodimer of a B chain and an A chain linked by two disulfide bonds.

The protein localises to the secreted. Brain peptide responsible for activation of prothoracic glands to produce ecdysone in insects. The sequence is that of Bombyxin A-2 (BBXA2) from Bombyx mori (Silk moth).